The following is a 133-amino-acid chain: Small ribosomal subunit protein uS8c (133 aa).

This sequence belongs to the universal ribosomal protein uS8 family. In terms of assembly, part of the 30S ribosomal subunit.

It localises to the plastid. Its subcellular location is the chloroplast. One of the primary rRNA binding proteins, it binds directly to 16S rRNA central domain where it helps coordinate assembly of the platform of the 30S subunit. The chain is Small ribosomal subunit protein uS8c (rps8) from Mesostigma viride (Green alga).